A 412-amino-acid polypeptide reads, in one-letter code: 2-methylacyl-CoA dehydrogenase, mitochondrial (412 aa).

A mitochondrion-targeting transit peptide spans 1–25; that stretch reads MHKLFAVRSLSSAIVKSFKSLQNQQ. Residues 154–163 and 187–189 each bind FAD; these read LAMSEPNAGS and WCT. Ser-163 is a binding site for substrate. Substrate contacts are provided by residues 209 to 210, Tyr-264, and 271 to 274; these read SK and DLER. Residue Glu-273 is the Proton acceptor of the active site. FAD is bound by residues Arg-299, Gln-310, and 367–371; that span reads QCLGG. 394–395 provides a ligand contact to substrate; the sequence is AG. An FAD-binding site is contributed by 396 to 398; that stretch reads TSE.

Belongs to the acyl-CoA dehydrogenase family. As to quaternary structure, homotetramer. FAD serves as cofactor. In terms of tissue distribution, expressed in flowers.

It localises to the mitochondrion. It catalyses the reaction 2-methylbutanoyl-CoA + oxidized [electron-transfer flavoprotein] + H(+) = (2E)-2-methylbut-2-enoyl-CoA + reduced [electron-transfer flavoprotein]. In terms of biological role, short/branched-chain acyl-CoA dehydrogenase (SBCAD). Uses 2-methylbutanoyl-CoA as substrate. Minor activity with the straight-chain substrates, butanoyl-CoA, valeryl-CoA, hexanoyl-CoA, and octanoyl-CoA but no activity with isovaleryl-CoA. This is 2-methylacyl-CoA dehydrogenase, mitochondrial (2MBCD) from Solanum tuberosum (Potato).